Here is a 288-residue protein sequence, read N- to C-terminus: Lipoyl synthase (288 aa).

C42, C47, C53, C68, C72, C75, and S280 together coordinate [4Fe-4S] cluster. Positions 54–269 constitute a Radical SAM core domain; it reads WGEGTATFMI…EKYGIELGFR (216 aa).

It belongs to the radical SAM superfamily. Lipoyl synthase family. The cofactor is [4Fe-4S] cluster.

It localises to the cytoplasm. The catalysed reaction is [[Fe-S] cluster scaffold protein carrying a second [4Fe-4S](2+) cluster] + N(6)-octanoyl-L-lysyl-[protein] + 2 oxidized [2Fe-2S]-[ferredoxin] + 2 S-adenosyl-L-methionine + 4 H(+) = [[Fe-S] cluster scaffold protein] + N(6)-[(R)-dihydrolipoyl]-L-lysyl-[protein] + 4 Fe(3+) + 2 hydrogen sulfide + 2 5'-deoxyadenosine + 2 L-methionine + 2 reduced [2Fe-2S]-[ferredoxin]. It participates in protein modification; protein lipoylation via endogenous pathway; protein N(6)-(lipoyl)lysine from octanoyl-[acyl-carrier-protein]: step 2/2. Functionally, catalyzes the radical-mediated insertion of two sulfur atoms into the C-6 and C-8 positions of the octanoyl moiety bound to the lipoyl domains of lipoate-dependent enzymes, thereby converting the octanoylated domains into lipoylated derivatives. The polypeptide is Lipoyl synthase (Flavobacterium johnsoniae (strain ATCC 17061 / DSM 2064 / JCM 8514 / BCRC 14874 / CCUG 350202 / NBRC 14942 / NCIMB 11054 / UW101) (Cytophaga johnsonae)).